Here is a 547-residue protein sequence, read N- to C-terminus: Threonylcarbamoyladenosine tRNA methylthiotransferase (547 aa).

The tract at residues 30-51 (ARKSVVPRARKHKQETGEQMQT) is disordered. Residues 59 to 167 (QKVWLKTWGC…VVEVVDEAIK (109 aa)) form the MTTase N-terminal domain. [4Fe-4S] cluster-binding residues include cysteine 68, cysteine 104, cysteine 133, cysteine 209, cysteine 213, and cysteine 216. Residues 195–426 (RKNPLIEIIS…ALFHSYRPYD (232 aa)) form the Radical SAM core domain. Residues 426–488 (DHKMGEQQQV…KHYMKGRPLE (63 aa)) enclose the TRAM domain. The chain crosses the membrane as a helical span at residues 527–547 (ILAVVLLLSAVLLALLMEKLL).

The protein belongs to the methylthiotransferase family. CDKAL1 subfamily. Requires [4Fe-4S] cluster as cofactor.

The protein resides in the endoplasmic reticulum membrane. The catalysed reaction is N(6)-L-threonylcarbamoyladenosine(37) in tRNA + (sulfur carrier)-SH + AH2 + 2 S-adenosyl-L-methionine = 2-methylsulfanyl-N(6)-L-threonylcarbamoyladenosine(37) in tRNA + (sulfur carrier)-H + 5'-deoxyadenosine + L-methionine + A + S-adenosyl-L-homocysteine + 2 H(+). Its function is as follows. Catalyzes the methylthiolation of N6-threonylcarbamoyladenosine (t(6)A), leading to the formation of 2-methylthio-N6-threonylcarbamoyladenosine (ms(2)t(6)A) at position 37 in tRNAs that read codons beginning with adenine. This is Threonylcarbamoyladenosine tRNA methylthiotransferase (cdkal1) from Danio rerio (Zebrafish).